The chain runs to 198 residues: V-type ATP synthase subunit E (198 aa).

This sequence belongs to the V-ATPase E subunit family.

Functionally, produces ATP from ADP in the presence of a proton gradient across the membrane. This is V-type ATP synthase subunit E from Acetivibrio thermocellus (strain ATCC 27405 / DSM 1237 / JCM 9322 / NBRC 103400 / NCIMB 10682 / NRRL B-4536 / VPI 7372) (Clostridium thermocellum).